The chain runs to 485 residues: Rop guanine nucleotide exchange factor 2 (485 aa).

The segment at 1-36 is disordered; that stretch reads MENLPNHEENDDVGYHQSPGPIDPNDHSASETPVYS. Positions 107-485 constitute a PRONE domain; sequence LAVQEISEPE…YVDKTMRGEE (379 aa).

Interacts with ARC10/ROP11. Expressed in the vascular tissues of roots, leaves, sepals, petals and siliques.

Its function is as follows. Guanine-nucleotide exchange factor (GEF) that acts as an activator of Rop (Rho of plants) GTPases by promoting the exchange of GDP for GTP. This chain is Rop guanine nucleotide exchange factor 2 (ROPGEF2), found in Arabidopsis thaliana (Mouse-ear cress).